Consider the following 488-residue polypeptide: Protein nucleotidyltransferase YdiU (488 aa).

Residues Gly91, Gly93, Arg94, Lys114, Asp126, Gly127, Arg177, and Arg184 each contribute to the ATP site. The Proton acceptor role is filled by Asp253. Mg(2+) contacts are provided by Asn254 and Asp263. ATP is bound at residue Asp263.

This sequence belongs to the SELO family. Mg(2+) serves as cofactor. Requires Mn(2+) as cofactor.

The enzyme catalyses L-seryl-[protein] + ATP = 3-O-(5'-adenylyl)-L-seryl-[protein] + diphosphate. It carries out the reaction L-threonyl-[protein] + ATP = 3-O-(5'-adenylyl)-L-threonyl-[protein] + diphosphate. It catalyses the reaction L-tyrosyl-[protein] + ATP = O-(5'-adenylyl)-L-tyrosyl-[protein] + diphosphate. The catalysed reaction is L-histidyl-[protein] + UTP = N(tele)-(5'-uridylyl)-L-histidyl-[protein] + diphosphate. The enzyme catalyses L-seryl-[protein] + UTP = O-(5'-uridylyl)-L-seryl-[protein] + diphosphate. It carries out the reaction L-tyrosyl-[protein] + UTP = O-(5'-uridylyl)-L-tyrosyl-[protein] + diphosphate. Its function is as follows. Nucleotidyltransferase involved in the post-translational modification of proteins. It can catalyze the addition of adenosine monophosphate (AMP) or uridine monophosphate (UMP) to a protein, resulting in modifications known as AMPylation and UMPylation. The polypeptide is Protein nucleotidyltransferase YdiU (Bacillus cereus (strain AH187)).